The chain runs to 98 residues: NADH-ubiquinone oxidoreductase chain 4L (98 aa).

3 helical membrane passes run 1-21 (MSIT…GMFV), 29-49 (SLLC…IVSL), and 61-81 (VILL…LIMV).

This sequence belongs to the complex I subunit 4L family. Core subunit of respiratory chain NADH dehydrogenase (Complex I) which is composed of 45 different subunits.

The protein localises to the mitochondrion inner membrane. It catalyses the reaction a ubiquinone + NADH + 5 H(+)(in) = a ubiquinol + NAD(+) + 4 H(+)(out). Functionally, core subunit of the mitochondrial membrane respiratory chain NADH dehydrogenase (Complex I) which catalyzes electron transfer from NADH through the respiratory chain, using ubiquinone as an electron acceptor. Part of the enzyme membrane arm which is embedded in the lipid bilayer and involved in proton translocation. The polypeptide is NADH-ubiquinone oxidoreductase chain 4L (MT-ND4L) (Ochotona princeps (Southern American pika)).